Reading from the N-terminus, the 327-residue chain is Undecaprenyl-phosphate 4-deoxy-4-formamido-L-arabinose transferase (327 aa).

The next 2 membrane-spanning stretches (helical) occupy residues 233-253 (ILSLIGSVVALSGFLLALLLI) and 268-288 (VFTLFAVLFMFIGAQFVGMGL).

The protein belongs to the glycosyltransferase 2 family.

The protein resides in the cell inner membrane. It carries out the reaction UDP-4-deoxy-4-formamido-beta-L-arabinose + di-trans,octa-cis-undecaprenyl phosphate = 4-deoxy-4-formamido-alpha-L-arabinopyranosyl di-trans,octa-cis-undecaprenyl phosphate + UDP. The protein operates within glycolipid biosynthesis; 4-amino-4-deoxy-alpha-L-arabinose undecaprenyl phosphate biosynthesis; 4-amino-4-deoxy-alpha-L-arabinose undecaprenyl phosphate from UDP-4-deoxy-4-formamido-beta-L-arabinose and undecaprenyl phosphate: step 1/2. It functions in the pathway bacterial outer membrane biogenesis; lipopolysaccharide biosynthesis. Its function is as follows. Catalyzes the transfer of 4-deoxy-4-formamido-L-arabinose from UDP to undecaprenyl phosphate. The modified arabinose is attached to lipid A and is required for resistance to polymyxin and cationic antimicrobial peptides. This Pectobacterium carotovorum subsp. carotovorum (strain PC1) protein is Undecaprenyl-phosphate 4-deoxy-4-formamido-L-arabinose transferase.